Consider the following 488-residue polypeptide: NADH-quinone oxidoreductase subunit N (488 aa).

Helical transmembrane passes span 15–35, 42–62, 79–99, 108–128, 133–153, 168–188, 209–229, 243–263, 277–297, 305–325, 333–353, 376–396, 409–429, and 456–476; these read LALP…VDLY, GMTF…AIVA, NLAA…FAYC, LLKG…MIMA, LMTV…MVAF, FVLG…IYGA, WLLL…FGAV, PTTV…ALFV, WQPM…LAAL, MLAY…IAGT, LFYA…IILL, MALM…TVGF, VGLV…AFYY, and GLLV…DSLI.

It belongs to the complex I subunit 2 family. As to quaternary structure, NDH-1 is composed of 14 different subunits. Subunits NuoA, H, J, K, L, M, N constitute the membrane sector of the complex.

It is found in the cell inner membrane. The catalysed reaction is a quinone + NADH + 5 H(+)(in) = a quinol + NAD(+) + 4 H(+)(out). In terms of biological role, NDH-1 shuttles electrons from NADH, via FMN and iron-sulfur (Fe-S) centers, to quinones in the respiratory chain. The immediate electron acceptor for the enzyme in this species is believed to be ubiquinone. Couples the redox reaction to proton translocation (for every two electrons transferred, four hydrogen ions are translocated across the cytoplasmic membrane), and thus conserves the redox energy in a proton gradient. In Alkalilimnicola ehrlichii (strain ATCC BAA-1101 / DSM 17681 / MLHE-1), this protein is NADH-quinone oxidoreductase subunit N.